The chain runs to 447 residues: N-succinylarginine dihydrolase (447 aa).

Substrate-binding positions include 19–28 (AGLSFGNEAS), N110, and 137–138 (HR). E174 is a catalytic residue. Residue R212 participates in substrate binding. H248 is a catalytic residue. 2 residues coordinate substrate: D250 and N359. C365 (nucleophile) is an active-site residue.

Belongs to the succinylarginine dihydrolase family. Homodimer.

It catalyses the reaction N(2)-succinyl-L-arginine + 2 H2O + 2 H(+) = N(2)-succinyl-L-ornithine + 2 NH4(+) + CO2. The protein operates within amino-acid degradation; L-arginine degradation via AST pathway; L-glutamate and succinate from L-arginine: step 2/5. In terms of biological role, catalyzes the hydrolysis of N(2)-succinylarginine into N(2)-succinylornithine, ammonia and CO(2). This chain is N-succinylarginine dihydrolase, found in Escherichia coli (strain SE11).